The following is a 210-amino-acid chain: Ribosomal RNA small subunit methyltransferase G (210 aa).

Residues Gly-76, Leu-81, 127-128, and Arg-142 each bind S-adenosyl-L-methionine; that span reads VE.

Belongs to the methyltransferase superfamily. RNA methyltransferase RsmG family.

The protein localises to the cytoplasm. The enzyme catalyses guanosine(527) in 16S rRNA + S-adenosyl-L-methionine = N(7)-methylguanosine(527) in 16S rRNA + S-adenosyl-L-homocysteine. Functionally, specifically methylates the N7 position of guanine in position 527 of 16S rRNA. This is Ribosomal RNA small subunit methyltransferase G from Vibrio cholerae serotype O1 (strain ATCC 39541 / Classical Ogawa 395 / O395).